A 369-amino-acid chain; its full sequence is Glutamate 5-kinase (369 aa).

K9 provides a ligand contact to ATP. Substrate-binding residues include S49, D136, and N148. Residues 168–169 and 210–216 contribute to the ATP site; these read TD and TGGMLTK. The region spanning 275–355 is the PUA domain; sequence QGSIWVDKGA…KGVLIYRDDW (81 aa).

Belongs to the glutamate 5-kinase family.

The protein localises to the cytoplasm. It carries out the reaction L-glutamate + ATP = L-glutamyl 5-phosphate + ADP. It functions in the pathway amino-acid biosynthesis; L-proline biosynthesis; L-glutamate 5-semialdehyde from L-glutamate: step 1/2. In terms of biological role, catalyzes the transfer of a phosphate group to glutamate to form L-glutamate 5-phosphate. The polypeptide is Glutamate 5-kinase (Streptococcus pneumoniae serotype 4 (strain ATCC BAA-334 / TIGR4)).